We begin with the raw amino-acid sequence, 433 residues long: Glutamate-1-semialdehyde 2,1-aminomutase (433 aa).

Residue K266 is modified to N6-(pyridoxal phosphate)lysine.

It belongs to the class-III pyridoxal-phosphate-dependent aminotransferase family. HemL subfamily. In terms of assembly, homodimer. It depends on pyridoxal 5'-phosphate as a cofactor.

The protein localises to the cytoplasm. The enzyme catalyses (S)-4-amino-5-oxopentanoate = 5-aminolevulinate. It participates in porphyrin-containing compound metabolism; protoporphyrin-IX biosynthesis; 5-aminolevulinate from L-glutamyl-tRNA(Glu): step 2/2. This chain is Glutamate-1-semialdehyde 2,1-aminomutase, found in Psychrobacter cryohalolentis (strain ATCC BAA-1226 / DSM 17306 / VKM B-2378 / K5).